The sequence spans 375 residues: 23S rRNA (uracil(747)-C(5))-methyltransferase RlmC (375 aa).

[4Fe-4S] cluster-binding residues include C3, C11, C14, and C87. The S-adenosyl-L-methionine site is built by Q212, F241, E262, and N307. The Nucleophile role is filled by C334.

It belongs to the class I-like SAM-binding methyltransferase superfamily. RNA M5U methyltransferase family. RlmC subfamily.

It catalyses the reaction uridine(747) in 23S rRNA + S-adenosyl-L-methionine = 5-methyluridine(747) in 23S rRNA + S-adenosyl-L-homocysteine + H(+). In terms of biological role, catalyzes the formation of 5-methyl-uridine at position 747 (m5U747) in 23S rRNA. The chain is 23S rRNA (uracil(747)-C(5))-methyltransferase RlmC from Escherichia coli (strain K12 / MC4100 / BW2952).